The sequence spans 381 residues: 4-hydroxy-3-methylbut-2-en-1-yl diphosphate synthase (flavodoxin) (381 aa).

[4Fe-4S] cluster-binding residues include Cys280, Cys283, Cys315, and Glu322.

It belongs to the IspG family. It depends on [4Fe-4S] cluster as a cofactor.

The enzyme catalyses (2E)-4-hydroxy-3-methylbut-2-enyl diphosphate + oxidized [flavodoxin] + H2O + 2 H(+) = 2-C-methyl-D-erythritol 2,4-cyclic diphosphate + reduced [flavodoxin]. The protein operates within isoprenoid biosynthesis; isopentenyl diphosphate biosynthesis via DXP pathway; isopentenyl diphosphate from 1-deoxy-D-xylulose 5-phosphate: step 5/6. Functionally, converts 2C-methyl-D-erythritol 2,4-cyclodiphosphate (ME-2,4cPP) into 1-hydroxy-2-methyl-2-(E)-butenyl 4-diphosphate. This Clavibacter michiganensis subsp. michiganensis (strain NCPPB 382) protein is 4-hydroxy-3-methylbut-2-en-1-yl diphosphate synthase (flavodoxin).